Here is a 306-residue protein sequence, read N- to C-terminus: tRNA pseudouridine synthase B (306 aa).

Catalysis depends on Asp-39, which acts as the Nucleophile.

The protein belongs to the pseudouridine synthase TruB family. Type 1 subfamily.

The enzyme catalyses uridine(55) in tRNA = pseudouridine(55) in tRNA. Responsible for synthesis of pseudouridine from uracil-55 in the psi GC loop of transfer RNAs. The protein is tRNA pseudouridine synthase B of Arthrobacter sp. (strain FB24).